The following is a 396-amino-acid chain: Digeranylgeranylglycerophospholipid reductase 2 (396 aa).

Alanine 13, glutamate 32, cysteine 43, alanine 44, glycine 46, arginine 92, alanine 116, aspartate 278, glycine 290, and leucine 291 together coordinate FAD.

Belongs to the geranylgeranyl reductase family. DGGGPL reductase subfamily. The cofactor is FAD.

It catalyses the reaction a 2,3-bis-O-phytanyl-sn-glycerol 1-phospholipid + 8 A = a 2,3-bis-O-(geranylgeranyl)-sn-glycerol 1-phospholipid + 8 AH2. It carries out the reaction 2,3-bis-O-(phytanyl)-sn-glycerol 1-phosphate + 8 A = 2,3-bis-O-(geranylgeranyl)-sn-glycerol 1-phosphate + 8 AH2. The catalysed reaction is CDP-2,3-bis-O-(geranylgeranyl)-sn-glycerol + 8 AH2 = CDP-2,3-bis-O-(phytanyl)-sn-glycerol + 8 A. The enzyme catalyses archaetidylserine + 8 AH2 = 2,3-bis-O-phytanyl-sn-glycero-3-phospho-L-serine + 8 A. The protein operates within membrane lipid metabolism; glycerophospholipid metabolism. Its function is as follows. Is involved in the reduction of 2,3-digeranylgeranylglycerophospholipids (unsaturated archaeols) into 2,3-diphytanylglycerophospholipids (saturated archaeols) in the biosynthesis of archaeal membrane lipids. Catalyzes the formation of archaetidic acid (2,3-di-O-phytanyl-sn-glyceryl phosphate) from 2,3-di-O-geranylgeranylglyceryl phosphate (DGGGP) via the hydrogenation of each double bond of the isoprenoid chains. Is also probably able to reduce double bonds of geranyl groups in CDP-2,3-bis-O-(geranylgeranyl)-sn-glycerol and archaetidylserine, thus acting at various stages in the biosynthesis of archaeal membrane lipids. The chain is Digeranylgeranylglycerophospholipid reductase 2 from Methanopyrus kandleri (strain AV19 / DSM 6324 / JCM 9639 / NBRC 100938).